Here is a 282-residue protein sequence, read N- to C-terminus: uncharacterized protein (282 aa).

One can recognise an N-acetyltransferase domain in the interval 5 to 140 (DELIKLHEEH…SFQPYTKKLD (136 aa)).

This sequence belongs to the acetyltransferase family.

This is an uncharacterized protein from Bacillus subtilis (strain 168).